We begin with the raw amino-acid sequence, 366 residues long: Beta sliding clamp (366 aa).

It belongs to the beta sliding clamp family. As to quaternary structure, forms a ring-shaped head-to-tail homodimer around DNA which binds and tethers DNA polymerases and other proteins to the DNA. The DNA replisome complex has a single clamp-loading complex (3 tau and 1 each of delta, delta', psi and chi subunits) which binds 3 Pol III cores (1 core on the leading strand and 2 on the lagging strand) each with a beta sliding clamp dimer. Additional proteins in the replisome are other copies of gamma, psi and chi, Ssb, DNA helicase and RNA primase.

It is found in the cytoplasm. In terms of biological role, confers DNA tethering and processivity to DNA polymerases and other proteins. Acts as a clamp, forming a ring around DNA (a reaction catalyzed by the clamp-loading complex) which diffuses in an ATP-independent manner freely and bidirectionally along dsDNA. Initially characterized for its ability to contact the catalytic subunit of DNA polymerase III (Pol III), a complex, multichain enzyme responsible for most of the replicative synthesis in bacteria; Pol III exhibits 3'-5' exonuclease proofreading activity. The beta chain is required for initiation of replication as well as for processivity of DNA replication. The sequence is that of Beta sliding clamp (dnaN) from Chlamydia pneumoniae (Chlamydophila pneumoniae).